A 545-amino-acid chain; its full sequence is Tripartite motif-containing protein 26 (545 aa).

The RING-type zinc finger occupies 16–57; that stretch reads CSICLDYLRDPVTIDCGHVFCRSCTSDIRPISGNRPVCPLCK. A B box-type zinc finger spans residues 97–138; sequence QDMKLCERHQEKLHYYCEDDGKLLCVMCRESREHRPHTAVLV. The Zn(2+) site is built by Cys102, His105, Cys124, and His130. Positions 197 to 243 form a coiled coil; sequence QFLKKREQHLLDQLATLEQLLTEGREKFKTRGVSELDRLTLVISELE. A B30.2/SPRY domain is found at 301-545; the sequence is RGLRQFQGKL…WPGARLLLRP (245 aa). The segment at 382 to 443 is disordered; the sequence is REGWSEDEEE…EEEEEVQESC (62 aa). The segment covering 386–440 has biased composition (acidic residues); sequence SEDEEEGEEEEEGEEEEEDEEVGYGDGYEDWETDEEDESLGEEEEEEEEEEEEVQ.

The protein belongs to the TRIM/RBCC family. In terms of assembly, interacts with TBK1; this interaction bridges together TBK1 and NEMO in order to activate TBK1. Interacts with INCA1. In terms of processing, autoubiquitinates upon viral infection. In turn, autoubiquitinated TRIM26 recruits NEMO and bridges TBK1-NEMO interaction.

It localises to the cytoplasm. It is found in the nucleus. The catalysed reaction is S-ubiquitinyl-[E2 ubiquitin-conjugating enzyme]-L-cysteine + [acceptor protein]-L-lysine = [E2 ubiquitin-conjugating enzyme]-L-cysteine + N(6)-ubiquitinyl-[acceptor protein]-L-lysine.. Functionally, E3 ubiquitin-protein ligase which regulates the IFN-beta production and antiviral response downstream of various DNA-encoded pattern-recognition receptors (PRRs). Also plays a central role in determining the response to different forms of oxidative stress by controlling levels of DNA glycosylases NEIL1, NEIL3 and NTH1 that are involved in repair of damaged DNA. Promotes nuclear IRF3 ubiquitination and proteasomal degradation. Bridges together TBK1 and NEMO during the innate response to viral infection leading to the activation of TBK1. Positively regulates LPS-mediated inflammatory innate immune response by catalyzing the 'Lys-11'-linked polyubiquitination of TAB1 to enhance its activation and subsequent NF-kappa-B and MAPK signaling. In a manner independent of its catalytic activity, inhibits WWP2, a SOX2-directed E3 ubiquitin ligase, and thus protects SOX2 from polyubiquitination and proteasomal degradation. Ubiquitinates the histone acetyltransferase protein complex component PHF20 and thereby triggers its degradation in the nucleus after its recruitment by the histone demethylase KDM6B, serving as a scaffold protein. Upon induction by TGF-beta, ubiquitinates the TFIID component TAF7 for proteasomal degradation. Induces ferroptosis by ubiquitinating SLC7A11, a critical protein for lipid reactive oxygen species (ROS) scavenging. The protein is Tripartite motif-containing protein 26 (Trim26) of Mus musculus (Mouse).